Here is a 376-residue protein sequence, read N- to C-terminus: Anhydro-N-acetylmuramic acid kinase (376 aa).

ATP is bound at residue 11 to 18 (GTSMDGVD).

Belongs to the anhydro-N-acetylmuramic acid kinase family.

The enzyme catalyses 1,6-anhydro-N-acetyl-beta-muramate + ATP + H2O = N-acetyl-D-muramate 6-phosphate + ADP + H(+). It functions in the pathway amino-sugar metabolism; 1,6-anhydro-N-acetylmuramate degradation. The protein operates within cell wall biogenesis; peptidoglycan recycling. Catalyzes the specific phosphorylation of 1,6-anhydro-N-acetylmuramic acid (anhMurNAc) with the simultaneous cleavage of the 1,6-anhydro ring, generating MurNAc-6-P. Is required for the utilization of anhMurNAc either imported from the medium or derived from its own cell wall murein, and thus plays a role in cell wall recycling. In Acinetobacter baylyi (strain ATCC 33305 / BD413 / ADP1), this protein is Anhydro-N-acetylmuramic acid kinase.